We begin with the raw amino-acid sequence, 257 residues long: Isoprenyl transferase 1 (257 aa).

Aspartate 37 is a catalytic residue. Aspartate 37 lines the Mg(2+) pocket. Substrate is bound by residues 38 to 41 (GNRR), tryptophan 42, histidine 54, and 82 to 84 (STD). Asparagine 85 (proton acceptor) is an active-site residue. Substrate-binding positions include phenylalanine 86, arginine 88, arginine 206, and 212–214 (RLS). Glutamate 225 lines the Mg(2+) pocket.

Belongs to the UPP synthase family. In terms of assembly, homodimer. Mg(2+) is required as a cofactor.

Functionally, catalyzes the condensation of isopentenyl diphosphate (IPP) with allylic pyrophosphates generating different type of terpenoids. This is Isoprenyl transferase 1 from Streptomyces avermitilis (strain ATCC 31267 / DSM 46492 / JCM 5070 / NBRC 14893 / NCIMB 12804 / NRRL 8165 / MA-4680).